Consider the following 556-residue polypeptide: Formate--tetrahydrofolate ligase (556 aa).

65–72 (TPAGEGKS) is a binding site for ATP.

This sequence belongs to the formate--tetrahydrofolate ligase family.

It carries out the reaction (6S)-5,6,7,8-tetrahydrofolate + formate + ATP = (6R)-10-formyltetrahydrofolate + ADP + phosphate. The protein operates within one-carbon metabolism; tetrahydrofolate interconversion. In Clostridium perfringens (strain SM101 / Type A), this protein is Formate--tetrahydrofolate ligase.